The sequence spans 134 residues: Ribosome-binding factor A (134 aa).

Belongs to the RbfA family. In terms of assembly, monomer. Binds 30S ribosomal subunits, but not 50S ribosomal subunits or 70S ribosomes.

It localises to the cytoplasm. Functionally, one of several proteins that assist in the late maturation steps of the functional core of the 30S ribosomal subunit. Associates with free 30S ribosomal subunits (but not with 30S subunits that are part of 70S ribosomes or polysomes). Required for efficient processing of 16S rRNA. May interact with the 5'-terminal helix region of 16S rRNA. This is Ribosome-binding factor A from Tolumonas auensis (strain DSM 9187 / NBRC 110442 / TA 4).